The sequence spans 91 residues: MKVSAAALCVILTTAALCVPASASPYASDTTPCCFAYISRALPRTHIKEYFYTSSKCSNLAVVFVTRKNRQVCANPEKKWVREYINSLEMS.

The first 23 residues, 1-23 (MKVSAAALCVILTTAALCVPASA), serve as a signal peptide directing secretion. 2 disulfide bridges follow: Cys-33/Cys-57 and Cys-34/Cys-73.

This sequence belongs to the intercrine beta (chemokine CC) family.

The protein resides in the secreted. In terms of biological role, chemoattractant for blood monocytes, memory T-helper cells and eosinophils. Causes the release of histamine from basophils and activates eosinophils. May activate several chemokine receptors including CCR1, CCR3, CCR4 and CCR5. May also be an agonist of the G protein-coupled receptor GPR75. Together with GPR75, may play a role in neuron survival through activation of a downstream signaling pathway involving the PI3, Akt and MAP kinases. By activating GPR75 may also play a role in insulin secretion by islet cells. The sequence is that of C-C motif chemokine 5 (CCL5) from Cavia porcellus (Guinea pig).